The sequence spans 577 residues: Vacuolar protein sorting-associated protein 45 (577 aa).

It belongs to the STXBP/unc-18/SEC1 family. In terms of assembly, interacts with PEP7 and TLG2.

The protein resides in the cytoplasm. The protein localises to the vacuole membrane. Functionally, essential for vacuolar protein sorting. Function in membrane traffic between the Golgi and the vacuole. This is Vacuolar protein sorting-associated protein 45 (VPS45) from Saccharomyces cerevisiae (strain ATCC 204508 / S288c) (Baker's yeast).